Here is a 750-residue protein sequence, read N- to C-terminus: DDT domain-containing protein DDR4 (750 aa).

The segment at 1-125 (MGSSSDIVPD…ITSLVPPPEP (125 aa)) is disordered. A compositionally biased stretch (low complexity) spans 45 to 54 (RAQQRLQELQ). A compositionally biased stretch (basic and acidic residues) spans 55-77 (AAERKLKPPKKEYKREQHRRREE). The span at 78–100 (VVEEDEDSEDDDQEDEENDGDDE) shows a compositional bias: acidic residues. The region spanning 133-192 (LRSMWELASVLNFLHVFRPLLKINAEFSAEEFETALLTPNDTLSDIHIPLLKAIPPVTRM) is the DDT domain. 2 disordered regions span residues 450 to 505 (NGRS…TDFV) and 532 to 750 (LKKR…TDNS). Polar residues predominate over residues 451–471 (GRSTSSTHPTEPVNDTASGRS). Residues 545 to 585 (EGDEEKGDEEYKWDEDNAEYEEEEEEEEEEDSLSASEEDSD) show a composition bias toward acidic residues. Over residues 595 to 606 (RRETKLRSRSND) the composition is skewed to basic and acidic residues. Over residues 688–707 (NADTTNGKENNQLNKSNGTT) the composition is skewed to polar residues. The segment covering 741–750 (LKDDDKTDNS) has biased composition (basic and acidic residues).

As to quaternary structure, interacts (via the DDT domain) with CHR11 (via C-terminus).

It is found in the nucleus. Probable transcription regulator. The protein is DDT domain-containing protein DDR4 of Arabidopsis thaliana (Mouse-ear cress).